Reading from the N-terminus, the 360-residue chain is Peptide chain release factor 1 (360 aa).

Position 235 is an N5-methylglutamine (Gln-235). A disordered region spans residues 284–304 (KVDSERSADRKSQVGSGDRSE).

The protein belongs to the prokaryotic/mitochondrial release factor family. In terms of processing, methylated by PrmC. Methylation increases the termination efficiency of RF1.

The protein resides in the cytoplasm. Peptide chain release factor 1 directs the termination of translation in response to the peptide chain termination codons UAG and UAA. This chain is Peptide chain release factor 1, found in Agrobacterium fabrum (strain C58 / ATCC 33970) (Agrobacterium tumefaciens (strain C58)).